The chain runs to 543 residues: Ribonuclease Y (543 aa).

A helical membrane pass occupies residues 4–24 (IIMIPVATAIVSLLVGTVIGY). In terms of domain architecture, KH spans 233-296 (TVSVVDLPNE…EIAKRAMERL (64 aa)). The HD domain occupies 359–452 (VLSHSIEVGK…VVAADTISSA (94 aa)).

This sequence belongs to the RNase Y family.

Its subcellular location is the cell membrane. Its function is as follows. Endoribonuclease that initiates mRNA decay. The chain is Ribonuclease Y from Lactobacillus helveticus (strain DPC 4571).